The following is a 466-amino-acid chain: Adenosylhomocysteinase (466 aa).

Residues threonine 57, aspartate 132, and glutamate 192 each coordinate substrate. 193–195 is a binding site for NAD(+); it reads TTT. The substrate site is built by lysine 222 and aspartate 226. NAD(+)-binding positions include asparagine 227, 256-261, glutamate 279, asparagine 314, 335-337, and asparagine 380; these read GYGDVG and IGH.

Belongs to the adenosylhomocysteinase family. NAD(+) is required as a cofactor.

The protein localises to the cytoplasm. It catalyses the reaction S-adenosyl-L-homocysteine + H2O = L-homocysteine + adenosine. It participates in amino-acid biosynthesis; L-homocysteine biosynthesis; L-homocysteine from S-adenosyl-L-homocysteine: step 1/1. Its function is as follows. May play a key role in the regulation of the intracellular concentration of adenosylhomocysteine. In Brucella melitensis biotype 2 (strain ATCC 23457), this protein is Adenosylhomocysteinase.